The following is a 59-amino-acid chain: Conotoxin Ts-03 (59 aa).

Positions 1-19 (MRCLPVFIILLLLIPSAAS) are cleaved as a signal peptide. Positions 20–47 (VAQPKTKDDVALASFYDNAKRTLQRHWA) are excised as a propeptide.

The protein belongs to the conotoxin T superfamily. Contains 2 disulfide bonds that can be either 'C1-C3, C2-C4' or 'C1-C4, C2-C3', since these disulfide connectivities have been observed for conotoxins with cysteine framework V (for examples, see AC P0DQQ7 and AC P81755). Expressed by the venom duct.

The protein localises to the secreted. This Conus tessulatus (Tessellate cone) protein is Conotoxin Ts-03.